Reading from the N-terminus, the 218-residue chain is Putative inactive cathepsin L-like protein CTSL3P (218 aa).

Disordered stretches follow at residues 144–173 (GDWK…EVAQ) and 195–218 (GDED…EAQV). The segment covering 201-212 (EDKWPHDMRNHL) has biased composition (basic and acidic residues).

This sequence belongs to the peptidase C1 family.

In Homo sapiens (Human), this protein is Putative inactive cathepsin L-like protein CTSL3P (CTSL3P).